The sequence spans 1484 residues: Chromatin remodeling regulator CECR2 (1484 aa).

Positions 170-241 (VQGKSNGELS…RHGSQGPGQG (72 aa)) are disordered. Residues 197 to 209 (TGKRRGRPPKRKK) show a composition bias toward basic residues. Positions 210–222 (LQEEILLSEKQEE) are enriched in basic and acidic residues. The span at 223–234 (NSLASEPQTRHG) shows a compositional bias: polar residues. Serine 422 bears the Phosphoserine mark. Positions 434–538 (FELDDDFTAM…RCFHRAMMKH (105 aa)) constitute a Bromo domain. Residue threonine 546 is modified to Phosphothreonine. 6 disordered regions span residues 556 to 704 (EKRE…GPRL), 796 to 825 (GNHGATNQGPLGPDEKPHLGPGPSHQPRTL), 919 to 1053 (GVPY…SYPG), 1165 to 1259 (VMGG…LFSD), 1287 to 1320 (AKVPNDGQNPGPEEEKLDESMERPESPKEFLDLD), and 1442 to 1484 (YRPS…LDQS). Serine 571 is modified (phosphoserine). Residues 605–614 (SSGDDQSSSS) are compositionally biased toward low complexity. Phosphoserine is present on serine 1014. Asymmetric dimethylarginine is present on residues arginine 1197 and arginine 1203. Residues 1243 to 1254 (SGPPASQPPPPR) show a composition bias toward pro residues. A compositionally biased stretch (basic and acidic residues) spans 1304 to 1320 (DESMERPESPKEFLDLD). Serine 1312 is subject to Phosphoserine. The segment covering 1451–1469 (PVQSQASFPKTPTAATSQE) has biased composition (polar residues). Residues 1474 to 1484 (HKPPTLPLDQS) are compositionally biased toward pro residues.

As to quaternary structure, component of the CERF-1 ISWI chromatin remodeling complex (also called the CECR2-containing remodeling factor (CERF) complex) at least composed of CECR2 and SMARCA1. Component of the CERF-5 ISWI chromatin remodeling complex at least composed of SMARCA5/SNF2H and CECR2. LUZP1 is detected as part of the CERF-1 and CERF-5 complexes in embryonic stem (ES) cells where it is involved in complex stabilization but is not detected in the complexes in the testis. Interacts with CCAR2; CCAR2 may form part of the CERF-1 and/or CEF-5 ISWI chromatin remodeling complexes in ES cells. Interacts with acetylated lysine residues on histone H2A and H3 (in vitro). Interacts with LRPPRC. As to expression, highly expressed in skeletal muscle, thymus, placenta and lung. Expressed at lower level in brain, heart, colon, spleen, kidney.

It localises to the nucleus. Functionally, regulatory subunit of the ATP-dependent CERF-1 and CERF-5 ISWI chromatin remodeling complexes, which form ordered nucleosome arrays on chromatin and facilitate access to DNA during DNA-templated processes such as DNA replication, transcription, and repair. The complexes do not have the ability to slide mononucleosomes to the center of a DNA template. The CERF-1 ISWI chromatin remodeling complex has a lower ATP hydrolysis rate than the CERF-5 ISWI chromatin remodeling complex. Plays a role in various processes during development: required during embryogenesis for neural tube closure and inner ear development. In adults, required for spermatogenesis, via the formation of ISWI-type chromatin complexes. In histone-modifying complexes, CECR2 recognizes and binds acylated histones: binds histones that are acetylated and/or butyrylated. May also be involved through its interaction with LRPPRC in the integration of cytoskeletal network with vesicular trafficking, nucleocytosolic shuttling, transcription, chromosome remodeling and cytokinesis. This is Chromatin remodeling regulator CECR2 (CECR2) from Homo sapiens (Human).